Here is a 584-residue protein sequence, read N- to C-terminus: Glutathione hydrolase proenzyme (584 aa).

The signal sequence occupies residues 1–25 (MAPAAMNLLCTVLYLLSSFAQVSDA). N111 carries N-linked (GlcNAc...) asparagine glycosylation. R120 contributes to the L-glutamate binding site. N135, N262, N272, N350, and N370 each carry an N-linked (GlcNAc...) asparagine glycan. Catalysis depends on T395, which acts as the Nucleophile. L-glutamate is bound by residues T413, E434, and 465-466 (SS). An N-linked (GlcNAc...) asparagine glycan is attached at N547.

It belongs to the gamma-glutamyltransferase family. As to quaternary structure, heterodimer composed of the light and heavy chains. The active site is located in the light chain. In terms of processing, cleaved by autocatalysis into a large and a small subunit and the autocatalytic cleavage is essential to the functional activation of the enzyme.

The protein localises to the secreted. The catalysed reaction is an N-terminal (5-L-glutamyl)-[peptide] + an alpha-amino acid = 5-L-glutamyl amino acid + an N-terminal L-alpha-aminoacyl-[peptide]. It catalyses the reaction glutathione + H2O = L-cysteinylglycine + L-glutamate. The enzyme catalyses an S-substituted glutathione + H2O = an S-substituted L-cysteinylglycine + L-glutamate. It carries out the reaction leukotriene C4 + H2O = leukotriene D4 + L-glutamate. It functions in the pathway sulfur metabolism; glutathione metabolism. In terms of biological role, cleaves the gamma-glutamyl bond of extracellular glutathione (gamma-Glu-Cys-Gly), glutathione conjugates, and other gamma-glutamyl compounds. The metabolism of glutathione releases free glutamate and the dipeptide cysteinyl-glycine, which is hydrolyzed to cysteine and glycine by dipeptidases. In the presence of high concentrations of dipeptides and some amino acids, can also catalyze a transpeptidation reaction, transferring the gamma-glutamyl moiety to an acceptor amino acid to form a new gamma-glutamyl compound. Initiates extracellular glutathione (GSH) breakdown, provides cells with a local cysteine supply and contributes to maintain intracellular GSH level. It is part of the cell antioxidant defense mechanism. The polypeptide is Glutathione hydrolase proenzyme (Arthroderma benhamiae (strain ATCC MYA-4681 / CBS 112371) (Trichophyton mentagrophytes)).